Reading from the N-terminus, the 212-residue chain is Thymidylate kinase (212 aa).

Position 7–14 (7–14 (GIEGCGKS)) interacts with ATP.

This sequence belongs to the thymidylate kinase family.

It carries out the reaction dTMP + ATP = dTDP + ADP. Functionally, phosphorylation of dTMP to form dTDP in both de novo and salvage pathways of dTTP synthesis. In Trichlorobacter lovleyi (strain ATCC BAA-1151 / DSM 17278 / SZ) (Geobacter lovleyi), this protein is Thymidylate kinase.